A 684-amino-acid chain; its full sequence is Dipeptidyl-peptidase 5 (684 aa).

An N-terminal signal peptide occupies residues Met-1 to Gly-24. 3 WD repeats span residues Asp-87–Arg-127, Lys-220–Ile-259, and Thr-323–Arg-363. Active-site charge relay system residues include Ser-542, Asp-627, and His-659.

This sequence belongs to the peptidase S9C family. As to quaternary structure, homodimer.

The protein localises to the periplasm. Functionally, catalyzes the removal of dipeptides from the N-terminus of oligopeptides. Prefers Ala and hydrophobic residues except Pro at the P1 position, and has no preference for P2 residues. Shows high dipeptidyl peptidase activity toward the synthetic substrates Lys-Ala-, Gly-Phe-, Met-Leu-, and Ser-Tyr-methylcoumaryl-7-amide (MCA), and slowly hydrolyzes Val-Tyr-MCA. Is likely involved in amino acid metabolism and bacterial growth of asaccharolytic P.gingivalis, that utilizes amino acids from extracellular proteinaceous nutrients as energy and carbon sources. The sequence is that of Dipeptidyl-peptidase 5 from Porphyromonas gingivalis (strain ATCC 33277 / DSM 20709 / CIP 103683 / JCM 12257 / NCTC 11834 / 2561).